The primary structure comprises 234 residues: Endo-1,4-beta-xylanase 1 (234 aa).

The signal sequence occupies residues 1–21 (MVSFIFTRIILFAAAINGAVA). N-linked (GlcNAc...) asparagine glycosylation is found at asparagine 25 and asparagine 75. Positions 38–234 (SGTPSSTGYS…SSGFSSITVA (197 aa)) constitute a GH11 domain. Residue glutamate 124 is the Nucleophile of the active site. The N-linked (GlcNAc...) asparagine glycan is linked to asparagine 167. Glutamate 221 acts as the Proton donor in catalysis.

It belongs to the glycosyl hydrolase 11 (cellulase G) family.

Its subcellular location is the secreted. It catalyses the reaction Endohydrolysis of (1-&gt;4)-beta-D-xylosidic linkages in xylans.. The protein operates within glycan degradation; xylan degradation. In terms of biological role, endo-1,4-beta-xylanase involved in the hydrolysis of xylan, a major structural heterogeneous polysaccharide found in plant biomass representing the second most abundant polysaccharide in the biosphere, after cellulose. This Leucoagaricus gongylophorus (Leaf-cutting ant fungus) protein is Endo-1,4-beta-xylanase 1 (Xyn1).